We begin with the raw amino-acid sequence, 502 residues long: ATP synthase subunit alpha (502 aa).

An ATP-binding site is contributed by 169–176; that stretch reads GDRQTGKT.

This sequence belongs to the ATPase alpha/beta chains family. As to quaternary structure, F-type ATPases have 2 components, CF(1) - the catalytic core - and CF(0) - the membrane proton channel. CF(1) has five subunits: alpha(3), beta(3), gamma(1), delta(1), epsilon(1). CF(0) has three main subunits: a(1), b(2) and c(9-12). The alpha and beta chains form an alternating ring which encloses part of the gamma chain. CF(1) is attached to CF(0) by a central stalk formed by the gamma and epsilon chains, while a peripheral stalk is formed by the delta and b chains.

It localises to the cell inner membrane. The catalysed reaction is ATP + H2O + 4 H(+)(in) = ADP + phosphate + 5 H(+)(out). Its function is as follows. Produces ATP from ADP in the presence of a proton gradient across the membrane. The alpha chain is a regulatory subunit. The chain is ATP synthase subunit alpha from Oleidesulfovibrio alaskensis (strain ATCC BAA-1058 / DSM 17464 / G20) (Desulfovibrio alaskensis).